Consider the following 270-residue polypeptide: Nuclease P1 (270 aa).

A divalent metal cation is bound by residues W1, H6, H15, D45, and H60. A substrate-binding site is contributed by 1–6 (WGALGH). Substrate-binding positions include 45-51 (DEYRLTS), 60-63 (HFID), and 73-78 (NVDYER). Cystine bridges form between C72-C217 and C80-C85. N92 is a glycosylation site (N-linked (GlcNAc...) asparagine). Residues H116, D120, and H126 each coordinate a divalent metal cation. A substrate binding region spans residues 116–164 (HFIGDMTQPLHDEAYAVGGNKINVTFDGYHDNLHSDWDTYMPQKLIGGH). The N-linked (GlcNAc...) asparagine glycan is linked to N138. Positions 149 and 153 each coordinate a divalent metal cation. N-linked (GlcNAc...) asparagine glycosylation is found at N184 and N197.

This sequence belongs to the nuclease type I family. Requires Zn(2+) as cofactor.

The protein resides in the secreted. The catalysed reaction is Endonucleolytic cleavage to 5'-phosphomononucleotide and 5'-phosphooligonucleotide end-products.. Hydrolyzes only single-stranded DNA and RNA without apparent specificity for bases. This chain is Nuclease P1, found in Penicillium citrinum.